Consider the following 76-residue polypeptide: Small ribosomal subunit protein bS18 (76 aa).

Belongs to the bacterial ribosomal protein bS18 family. As to quaternary structure, part of the 30S ribosomal subunit. Forms a tight heterodimer with protein bS6.

Functionally, binds as a heterodimer with protein bS6 to the central domain of the 16S rRNA, where it helps stabilize the platform of the 30S subunit. The protein is Small ribosomal subunit protein bS18 of Marinobacter nauticus (strain ATCC 700491 / DSM 11845 / VT8) (Marinobacter aquaeolei).